The primary structure comprises 183 residues: Neuronal synaptobrevin (183 aa).

Low complexity predominate over residues Met-1–Pro-17. The segment at Met-1 to Asn-32 is disordered. Topologically, residues Met-1–Met-106 are cytoplasmic. The segment covering Ala-18–Val-27 has biased composition (gly residues). The v-SNARE coiled-coil homology domain occupies Arg-41–Gln-101. The chain crosses the membrane as a helical span at residues Ile-107–Ile-127. Over Gly-128–Val-183 the chain is Vesicular. Residues Tyr-135–Val-183 are disordered. Pro residues predominate over residues Tyr-141 to Gln-151. The span at Ala-165–Val-183 shows a compositional bias: gly residues.

Belongs to the synaptobrevin family. Part of the SNARE core complex containing Snap25 and syntaxin. As to expression, specifically expressed in neurons and synapses.

The protein resides in the cytoplasmic vesicle. The protein localises to the secretory vesicle. Its subcellular location is the synaptic vesicle membrane. It is found in the early endosome membrane. In terms of biological role, involved in the targeting and/or fusion of transport vesicles to their target membrane. Major SNARE protein of synaptic vesicles which mediates fusion of synaptic vesicles to release neurotransmitters. Essential for fast vesicular exocytosis and activity-dependent neurotransmitter release as well as fast endocytosis that mediates rapid reuse of synaptic vesicles. Also involved in a neuron-specific sort-and-degrade mechanism that promotes endolysosomal degradation and is required for neuronal maintenance. The polypeptide is Neuronal synaptobrevin (Drosophila melanogaster (Fruit fly)).